The sequence spans 595 residues: Beta-(1--&gt;2)glucan export ATP-binding/permease protein NdvA (595 aa).

Transmembrane regions (helical) follow at residues 21-41 (FLLI…EPIL), 56-76 (LVTL…YVLV), 129-149 (IWLE…VLVP), 158-178 (LSIV…LVMQ), and 252-272 (ISIV…QLSV). The region spanning 21-301 (FLLICTANIT…ISGFINLAVS (281 aa)) is the ABC transmembrane type-1 domain. Residues 335–569 (IQFHHVTYEF…DGHFYKLLKR (235 aa)) form the ABC transporter domain. 368 to 375 (GPTGAGKT) lines the ATP pocket.

Belongs to the ABC transporter superfamily. Beta-(1--&gt;2)glucan exporter (TC 3.A.1.108.1) family. In terms of assembly, homodimer.

Its subcellular location is the cell inner membrane. The enzyme catalyses [(1-&gt;2)-beta-D-glucosyl](n)(in) + ATP + H2O = [(1-&gt;2)-beta-D-glucosyl](n)(out) + ADP + phosphate + H(+). Involved in beta-(1--&gt;2)glucan export. Transmembrane domains (TMD) form a pore in the inner membrane and the ATP-binding domain (NBD) is responsible for energy generation. In Bartonella bacilliformis, this protein is Beta-(1--&gt;2)glucan export ATP-binding/permease protein NdvA.